Here is a 635-residue protein sequence, read N- to C-terminus: Threonine--tRNA ligase (635 aa).

Residues 1–58 (MIQVTCDQKNYEVLEGTTAAELAKQLKNSHQFIGVLINERPRDLSTHLNEGDTLVFLT) enclose the TGS domain. The catalytic stretch occupies residues 237–528 (DHRVLGAKLD…LIENFKGRFP (292 aa)). Zn(2+) contacts are provided by C328, H379, and H505.

The protein belongs to the class-II aminoacyl-tRNA synthetase family. Homodimer. The cofactor is Zn(2+).

It is found in the cytoplasm. It carries out the reaction tRNA(Thr) + L-threonine + ATP = L-threonyl-tRNA(Thr) + AMP + diphosphate + H(+). In terms of biological role, catalyzes the attachment of threonine to tRNA(Thr) in a two-step reaction: L-threonine is first activated by ATP to form Thr-AMP and then transferred to the acceptor end of tRNA(Thr). Also edits incorrectly charged L-seryl-tRNA(Thr). This is Threonine--tRNA ligase from Chlamydia pneumoniae (Chlamydophila pneumoniae).